Here is a 120-residue protein sequence, read N- to C-terminus: MVKLTSIAAGVAAIAATASATTTIAQSDERVNLVELGVYVSDIRAHLAQYYMFQAAHPTETYPVEVAEAVFNYGDFTTMLTGIAPDQVTRMITGVPWYSSRLKPAISKALSKDGIYTIAN.

A helical transmembrane segment spans residues 7–24 (IAAGVAAIAATASATTTI).

This sequence belongs to the SRP1/TIP1 family. Seripauperin subfamily.

It is found in the membrane. This is Seripauperin-4 (PAU4) from Saccharomyces cerevisiae (strain ATCC 204508 / S288c) (Baker's yeast).